Here is a 271-residue protein sequence, read N- to C-terminus: Homeobox protein pal-1 (271 aa).

3 disordered regions span residues 1 to 25, 100 to 135, and 178 to 202; these read MSVDVKSEFSENDSSSSSSSPTNVN, PPLSNGSSSSDSGMYPSPNDLTPFPSTSSGIGASSS, and GSAGKERRASSDTKSLPTGPGTNNV. Composition is skewed to low complexity over residues 100–117 and 125–135; these read PPLSNGSSSSDSGMYPSP and STSSGIGASSS. Residues 189 to 202 show a composition bias toward polar residues; sequence DTKSLPTGPGTNNV. A DNA-binding region (homeobox) is located at residues 207–266; sequence ADKYRMVYSDYQRLELEKEFHTSAFITSDRKSQLSTMLSLTERQIKIWFQNRRAKDRRDK.

This sequence belongs to the Caudal homeobox family. In terms of assembly, interacts with tir-1 and let-756.

Its subcellular location is the nucleus. It localises to the chromosome. The protein localises to the centromere. It is found in the kinetochore. Its function is as follows. Transcriptional activator. Interacts with promoter regions for tbx-8.9, tbx-9, elt-1, hnd-1, scrt-1, and vab-7 genes. Binds the sequence ATTTATGAC. Binds to the enhancer region of the hlh-1 gene promoter during embryonic body wall muscle development. Activates the gene for mab-5 in embryo development. Necessary for vab-7 expression in C blastomeres in the posterior of embryos. Required for posterior V6 neuroectoblast cell fate specification during postembryonic neurogenesis (patterning) which generates the characteristic ray lineage during male tail development. Binds to ced-3 promoter and activated expression which is crucial for tail-spike cell death. Has a role in E cell specification in endoderm development and body wall muscle development. This Caenorhabditis briggsae protein is Homeobox protein pal-1.